We begin with the raw amino-acid sequence, 273 residues long: Large ribosomal subunit protein uL2c (273 aa).

Positions 223–273 are disordered; the sequence is MNPVDHPHGGGEGRAPIGRKKPTTPWGYPALGRRSRKRNKYSDSFILRRRK.

The protein belongs to the universal ribosomal protein uL2 family. As to quaternary structure, part of the 50S ribosomal subunit.

The protein localises to the plastid. It localises to the chloroplast. This Calycanthus floridus var. glaucus (Eastern sweetshrub) protein is Large ribosomal subunit protein uL2c (rpl2).